A 635-amino-acid polypeptide reads, in one-letter code: Cerevisin (635 aa).

An N-terminal signal peptide occupies residues 1-19 (MKLENTLFTLGALGSISAA). Positions 20-280 (LVIPNLENAA…VERDSIVEAT (261 aa)) are excised as a propeptide. Basic and acidic residues-rich tracts occupy residues 35 to 50 (INKE…VEFT), 74 to 85 (KGQDKESPEFNG), 94 to 109 (SAHE…HESS), and 126 to 136 (GCHENKVEEKK). The segment at 35–155 (INKEDHHERP…KHHEKTLEKG (121 aa)) is disordered. Residues 137–155 (MKGKKVKGKKHHEKTLEKG) are compositionally biased toward basic residues. The region spanning 182 to 278 (RYIIVFKRGA…DFVERDSIVE (97 aa)) is the Inhibitor I9 domain. One can recognise a Peptidase S8 domain in the interval 289–614 (PWGLARISHR…KQELNMDEFI (326 aa)). Catalysis depends on charge relay system residues Asp-325 and His-357. An intrachain disulfide couples Cys-460 to Cys-491. Ser-519 functions as the Charge relay system in the catalytic mechanism. The propeptide occupies 575-635 (DTPNVLIYNG…RDILDKLNII (61 aa)). Asn-594 carries an N-linked (GlcNAc...) asparagine glycan.

This sequence belongs to the peptidase S8 family. Post-translationally, activated by N- and C-terminal proteolytic cleavage. Protease B (PrB/PRB1) processing requires at least 4 cleavages. First, the signal peptide is removed from the 76 kDa preproprotease B by signal peptidase in the ER. Then, PrB removes its own Pro-region (in trans) at the N-terminus, producing a 39 kDa form before exiting the ER. In the Golgi complex, the C-terminal Post-region of the 40 kDa proprotease B undergoes protease A (PrA/PEP4)-mediated processing to a 37 kDa intermediate, which in turn is quickly processed again by PrB in trans to yield the 31 kDa mature PrB. Glycosylated. Preproprotease B is a 76 kDa unglycosylated precursor that enters the endoplasmic reticulum (ER), where it receives one Asn-linked and an undetermined number of non-Asn-linked carbohydrate side chains. In the Golgi complex, the 39 kDa form becomes 40 kDa, due to elaboration of the Asn-linked side chain. The ultimate processing step removes a peptide containing the Asn-linked chain. Mature PrB has only non-Asn-linked carbohydrates.

It localises to the vacuole. It catalyses the reaction Hydrolysis of proteins with broad specificity, and of Bz-Arg-OEt &gt; Ac-Tyr-OEt. Does not hydrolyze peptide amides.. Its function is as follows. Vacuolar proteinase B involved in protein degradation in the vacuole. Among other substrates, acts on carboxypeptidase Y (cpY/PRC1) to activate it by processing its Pro-peptide. Required for meiosis and spore formation, and for optimal survival in stationary phase. This chain is Cerevisin (PRB1), found in Saccharomyces cerevisiae (strain ATCC 204508 / S288c) (Baker's yeast).